Here is a 137-residue protein sequence, read N- to C-terminus: Peptide methionine sulfoxide reductase MsrB (137 aa).

The region spanning 7–129 (PTENIEKLSD…NSASLNFVDD (123 aa)) is the MsrB domain. 4 residues coordinate Zn(2+): C46, C49, C95, and C98. The Nucleophile role is filled by C118.

This sequence belongs to the MsrB Met sulfoxide reductase family. Zn(2+) is required as a cofactor.

The catalysed reaction is L-methionyl-[protein] + [thioredoxin]-disulfide + H2O = L-methionyl-(R)-S-oxide-[protein] + [thioredoxin]-dithiol. This is Peptide methionine sulfoxide reductase MsrB from Yersinia pseudotuberculosis serotype O:1b (strain IP 31758).